The primary structure comprises 427 residues: Enolase (427 aa).

Residue Q163 participates in (2R)-2-phosphoglycerate binding. E205 acts as the Proton donor in catalysis. Residues D242, E283, and D310 each coordinate Mg(2+). The (2R)-2-phosphoglycerate site is built by K335, R364, S365, and K386. The active-site Proton acceptor is K335.

Belongs to the enolase family. The cofactor is Mg(2+).

The protein localises to the cytoplasm. It is found in the secreted. The protein resides in the cell surface. The catalysed reaction is (2R)-2-phosphoglycerate = phosphoenolpyruvate + H2O. It participates in carbohydrate degradation; glycolysis; pyruvate from D-glyceraldehyde 3-phosphate: step 4/5. Functionally, catalyzes the reversible conversion of 2-phosphoglycerate (2-PG) into phosphoenolpyruvate (PEP). It is essential for the degradation of carbohydrates via glycolysis. The protein is Enolase of Salinispora arenicola (strain CNS-205).